We begin with the raw amino-acid sequence, 305 residues long: UDP-3-O-acyl-N-acetylglucosamine deacetylase (305 aa).

3 residues coordinate Zn(2+): H79, H238, and D242. H265 (proton donor) is an active-site residue.

Belongs to the LpxC family. Requires Zn(2+) as cofactor.

It carries out the reaction a UDP-3-O-[(3R)-3-hydroxyacyl]-N-acetyl-alpha-D-glucosamine + H2O = a UDP-3-O-[(3R)-3-hydroxyacyl]-alpha-D-glucosamine + acetate. It functions in the pathway glycolipid biosynthesis; lipid IV(A) biosynthesis; lipid IV(A) from (3R)-3-hydroxytetradecanoyl-[acyl-carrier-protein] and UDP-N-acetyl-alpha-D-glucosamine: step 2/6. In terms of biological role, catalyzes the hydrolysis of UDP-3-O-myristoyl-N-acetylglucosamine to form UDP-3-O-myristoylglucosamine and acetate, the committed step in lipid A biosynthesis. The polypeptide is UDP-3-O-acyl-N-acetylglucosamine deacetylase (Pasteurella multocida (strain Pm70)).